The following is a 466-amino-acid chain: MVLDNLGSSLRGSLDKLQGKSRLDEDDVEEIVKEIQRSLLSADVEVSLVMELSSSIEDRATGEEPPAGTSARDHVLRIVYEELVDLVGDSTDLPLKSQTILLAGLQGSGKTTSAAKMAWWFSTKGLRPAVIQTDTFRPGAYDQAEQMCERAEVSFYGDPDCDDPVKIAREGIEATADADIHIVDTAGRHALEADLIDEIEAIDSTVAPDRSLLVLDAAIGQGAKQQAREFNNAIGIDGVVVTKLDGTAKGGGALTAVNETDSSIAFLGTGETVQDVERFEPNGFISRLLGMGDLKQLSERVERAMAETQEADDDWDPEDIMEGSFTLKDMRKQMEAMDRMGPLDQVMDMIPGLGGGLKDQLPDDAMDVTQNRMRDFDVIMDSMTEAELEDPRSVGASRVRRIARGSGTDEETVRELLQQHKMMERTIKQFQGMGEGDMQRMMKKMQQQGGGGMGGLGGGGGLGPFG.

Residues 104–111, 184–188, and 242–245 each bind GTP; these read GLQGSGKT, DTAGR, and TKLD. The segment at 446 to 466 is disordered; that stretch reads QQQGGGGMGGLGGGGGLGPFG. Gly residues predominate over residues 448–466; sequence QGGGGMGGLGGGGGLGPFG.

It belongs to the GTP-binding SRP family. SRP54 subfamily. As to quaternary structure, part of the signal recognition particle protein translocation system, which is composed of SRP and FtsY. Archaeal SRP consists of a 7S RNA molecule of 300 nucleotides and two protein subunits: SRP54 and SRP19.

It localises to the cytoplasm. It carries out the reaction GTP + H2O = GDP + phosphate + H(+). Involved in targeting and insertion of nascent membrane proteins into the cytoplasmic membrane. Binds to the hydrophobic signal sequence of the ribosome-nascent chain (RNC) as it emerges from the ribosomes. The SRP-RNC complex is then targeted to the cytoplasmic membrane where it interacts with the SRP receptor FtsY. This chain is Signal recognition particle 54 kDa protein, found in Haloquadratum walsbyi (strain DSM 16790 / HBSQ001).